A 270-amino-acid polypeptide reads, in one-letter code: tRNA pseudouridine synthase A (270 aa).

Residue aspartate 60 is the Nucleophile of the active site. The interval 107 to 111 (FHARF) is RNA binding. Substrate is bound at residue tyrosine 118. The interaction with tRNA stretch occupies residues 168–172 (QCQSR).

Belongs to the tRNA pseudouridine synthase TruA family. Homodimer.

It catalyses the reaction uridine(38/39/40) in tRNA = pseudouridine(38/39/40) in tRNA. Its function is as follows. Formation of pseudouridine at positions 38, 39 and 40 in the anticodon stem and loop of transfer RNAs. The chain is tRNA pseudouridine synthase A from Escherichia coli O9:H4 (strain HS).